Reading from the N-terminus, the 349-residue chain is 4-hydroxythreonine-4-phosphate dehydrogenase (349 aa).

T136 lines the substrate pocket. A divalent metal cation-binding residues include H171, H216, and H281. Substrate-binding residues include K289, N298, and R307.

The protein belongs to the PdxA family. Homodimer. Requires a divalent metal cation as cofactor.

It localises to the cytoplasm. The enzyme catalyses 4-(phosphooxy)-L-threonine + NAD(+) = 3-amino-2-oxopropyl phosphate + CO2 + NADH. Its pathway is cofactor biosynthesis; pyridoxine 5'-phosphate biosynthesis; pyridoxine 5'-phosphate from D-erythrose 4-phosphate: step 4/5. Catalyzes the NAD(P)-dependent oxidation of 4-(phosphooxy)-L-threonine (HTP) into 2-amino-3-oxo-4-(phosphooxy)butyric acid which spontaneously decarboxylates to form 3-amino-2-oxopropyl phosphate (AHAP). This Synechocystis sp. (strain ATCC 27184 / PCC 6803 / Kazusa) protein is 4-hydroxythreonine-4-phosphate dehydrogenase.